Here is a 509-residue protein sequence, read N- to C-terminus: ATP synthase subunit alpha (509 aa).

Glycine 169–threonine 176 provides a ligand contact to ATP.

It belongs to the ATPase alpha/beta chains family. As to quaternary structure, F-type ATPases have 2 components, CF(1) - the catalytic core - and CF(0) - the membrane proton channel. CF(1) has five subunits: alpha(3), beta(3), gamma(1), delta(1), epsilon(1). CF(0) has three main subunits: a(1), b(2) and c(9-12). The alpha and beta chains form an alternating ring which encloses part of the gamma chain. CF(1) is attached to CF(0) by a central stalk formed by the gamma and epsilon chains, while a peripheral stalk is formed by the delta and b chains.

Its subcellular location is the cell inner membrane. The enzyme catalyses ATP + H2O + 4 H(+)(in) = ADP + phosphate + 5 H(+)(out). Its function is as follows. Produces ATP from ADP in the presence of a proton gradient across the membrane. The alpha chain is a regulatory subunit. The sequence is that of ATP synthase subunit alpha from Brucella suis biovar 1 (strain 1330).